The chain runs to 530 residues: Glucose-6-phosphate isomerase (530 aa).

The active-site Proton donor is the Glu-347. Catalysis depends on residues His-378 and Lys-493.

The protein belongs to the GPI family.

The protein localises to the cytoplasm. It catalyses the reaction alpha-D-glucose 6-phosphate = beta-D-fructose 6-phosphate. The protein operates within carbohydrate biosynthesis; gluconeogenesis. It functions in the pathway carbohydrate degradation; glycolysis; D-glyceraldehyde 3-phosphate and glycerone phosphate from D-glucose: step 2/4. In terms of biological role, catalyzes the reversible isomerization of glucose-6-phosphate to fructose-6-phosphate. The protein is Glucose-6-phosphate isomerase of Chlamydia abortus (strain DSM 27085 / S26/3) (Chlamydophila abortus).